The primary structure comprises 379 residues: Alanine racemase (379 aa).

Lys35 acts as the Proton acceptor; specific for D-alanine in catalysis. An N6-(pyridoxal phosphate)lysine modification is found at Lys35. Arg133 contacts substrate. Tyr265 (proton acceptor; specific for L-alanine) is an active-site residue. A substrate-binding site is contributed by Met312.

It belongs to the alanine racemase family. The cofactor is pyridoxal 5'-phosphate.

The catalysed reaction is L-alanine = D-alanine. The protein operates within amino-acid biosynthesis; D-alanine biosynthesis; D-alanine from L-alanine: step 1/1. In terms of biological role, catalyzes the interconversion of L-alanine and D-alanine. May also act on other amino acids. The chain is Alanine racemase (alr) from Treponema denticola (strain ATCC 35405 / DSM 14222 / CIP 103919 / JCM 8153 / KCTC 15104).